We begin with the raw amino-acid sequence, 731 residues long: Endopolyphosphatase (731 aa).

Residues 1 to 4 are Cytoplasmic-facing; that stretch reads MSLS. The helical; Signal-anchor for type II membrane protein transmembrane segment at 5 to 25 threads the bilayer; sequence RCILGLACLWHGVIASPLGAV. The Vacuolar portion of the chain corresponds to 26-731; it reads PSNIPIATDL…VEKEDLKKFT (706 aa). Asn106 carries N-linked (GlcNAc...) asparagine glycosylation. Positions 375-403 are disordered; the sequence is KLQPPPTDSKNSGQLKKGKKGRKGKKKKP. Positions 390–402 are enriched in basic residues; it reads KKGKKGRKGKKKK. The N-linked (GlcNAc...) asparagine glycan is linked to Asn433. Residues 456 to 522 form a disordered region; that stretch reads EQNDRQKHLD…PPGPAYSPQP (67 aa). Composition is skewed to basic and acidic residues over residues 457–474 and 492–501; these read QNDR…PSHM and GGDSKPKKPD. A compositionally biased stretch (pro residues) spans 505–519; the sequence is PHPPAKSSPPGPAYS. Asn534 and Asn540 each carry an N-linked (GlcNAc...) asparagine glycan. The tract at residues 626–706 is disordered; the sequence is AKSIDVSYES…HKKKKGKKRQ (81 aa). Over residues 636-686 the composition is skewed to acidic residues; the sequence is AAEEEEEEEEEEEEDLFEEVEETDEEEEQEDDDLSDGEEVDDDSDEDELET. Residues 691–706 are compositionally biased toward basic residues; it reads KHDKKKHKKKKGKKRQ.

The protein belongs to the endopolyphosphatase PPN1 family. The cofactor is a divalent metal cation. In terms of processing, processing by proteases in the vacuole may be required for activation.

It is found in the vacuole membrane. The enzyme catalyses [phosphate](n+1) + n H2O = (n+1) phosphate + n H(+). In terms of biological role, catalyzes the hydrolysis of inorganic polyphosphate (polyP) chains of many hundreds of phosphate residues into shorter lengths. The protein is Endopolyphosphatase (epp-1) of Neurospora crassa (strain ATCC 24698 / 74-OR23-1A / CBS 708.71 / DSM 1257 / FGSC 987).